We begin with the raw amino-acid sequence, 214 residues long: tRNA (guanine-N(7)-)-methyltransferase (214 aa).

Residues Glu43, Glu68, Asp95, and Asp117 each contribute to the S-adenosyl-L-methionine site. Asp117 is an active-site residue. Residues Lys121, Asp153, and 190-193 (TEYE) contribute to the substrate site.

It belongs to the class I-like SAM-binding methyltransferase superfamily. TrmB family.

It catalyses the reaction guanosine(46) in tRNA + S-adenosyl-L-methionine = N(7)-methylguanosine(46) in tRNA + S-adenosyl-L-homocysteine. It functions in the pathway tRNA modification; N(7)-methylguanine-tRNA biosynthesis. Functionally, catalyzes the formation of N(7)-methylguanine at position 46 (m7G46) in tRNA. The sequence is that of tRNA (guanine-N(7)-)-methyltransferase from Staphylococcus aureus (strain JH1).